The following is a 205-amino-acid chain: Large ribosomal subunit protein uL3 (205 aa).

The protein belongs to the universal ribosomal protein uL3 family. As to quaternary structure, part of the 50S ribosomal subunit. Forms a cluster with proteins L14 and L19.

In terms of biological role, one of the primary rRNA binding proteins, it binds directly near the 3'-end of the 23S rRNA, where it nucleates assembly of the 50S subunit. This Thermosipho melanesiensis (strain DSM 12029 / CIP 104789 / BI429) protein is Large ribosomal subunit protein uL3.